A 230-amino-acid polypeptide reads, in one-letter code: D-glycero-alpha-D-manno-heptose 1-phosphate guanylyltransferase (230 aa).

The protein belongs to the D-alpha-D-heptose-1-P guanylyltransferase family.

It catalyses the reaction D-glycero-alpha-D-manno-heptose 1-phosphate + GTP + H(+) = GDP-D-glycero-alpha-D-manno-heptose + diphosphate. It functions in the pathway nucleotide-sugar biosynthesis; GDP-D-glycero-alpha-D-manno-heptose biosynthesis; GDP-D-glycero-alpha-D-manno-heptose from D-glycero-alpha-D-manno-heptose 7-phosphate: step 3/3. It participates in cell surface structure biogenesis; S-layer biogenesis. Its function is as follows. Catalyzes the GDP transfer from GTP to D-glycero-alpha-D-manno-heptose 1-phosphate, yielding GDP-D-alpha-D-heptose. Cannot use ATP, CTP, dTTP or UTP as substrate. This is D-glycero-alpha-D-manno-heptose 1-phosphate guanylyltransferase (hddC) from Aneurinibacillus thermoaerophilus.